Reading from the N-terminus, the 308-residue chain is MTEQRKHKVITLMGPTASGKTALAIELVKNYDCEIISVDSALIYQQMDVGSAKPDAAELAVAPHHLIDIIDPADSYSAADFRKDALLKIEDIISRGKTPLLVGGTMMYFKALIEGLSPLPGANDEIRAQIAVEAQANGWQALHDQLKEVDPVAAARIHPNDPQRLARALEVFRISGKSLTELTKVKSEAFPYEAIQFAIAPNDRKVLHKAIETRFKAMLGLGFVEEVKKLKSRDDLHLELPSMRCVGYRQCWQHLDGEYDYETMVEKAIVATRQLAKRQLTWLRGWPDLIWLESGAENNLDTVLRYSR.

14–21 provides a ligand contact to ATP; it reads GPTASGKT. 16-21 contacts substrate; it reads TASGKT. Interaction with substrate tRNA stretches follow at residues 39 to 42, 163 to 167, and 244 to 249; these read DSAL, QRLAR, and RCVGYR.

The protein belongs to the IPP transferase family. Monomer. The cofactor is Mg(2+).

The enzyme catalyses adenosine(37) in tRNA + dimethylallyl diphosphate = N(6)-dimethylallyladenosine(37) in tRNA + diphosphate. Catalyzes the transfer of a dimethylallyl group onto the adenine at position 37 in tRNAs that read codons beginning with uridine, leading to the formation of N6-(dimethylallyl)adenosine (i(6)A). This chain is tRNA dimethylallyltransferase, found in Shewanella piezotolerans (strain WP3 / JCM 13877).